A 386-amino-acid chain; its full sequence is Tubulin beta-1 chain (386 aa).

The GTP site is built by E7, S76, G80, T81, G82, N142, and N164. Position 7 (E7) interacts with Mg(2+). The tract at residues 363-386 (YQDATADEEGEYEDEEEDLQAEDM) is disordered. Positions 367-386 (TADEEGEYEDEEEDLQAEDM) are enriched in acidic residues.

This sequence belongs to the tubulin family. Dimer of alpha and beta chains. A typical microtubule is a hollow water-filled tube with an outer diameter of 25 nm and an inner diameter of 15 nM. Alpha-beta heterodimers associate head-to-tail to form protofilaments running lengthwise along the microtubule wall with the beta-tubulin subunit facing the microtubule plus end conferring a structural polarity. Microtubules usually have 13 protofilaments but different protofilament numbers can be found in some organisms and specialized cells. Mg(2+) is required as a cofactor.

The protein resides in the cytoplasm. Its subcellular location is the cytoskeleton. Its function is as follows. Tubulin is the major constituent of microtubules, a cylinder consisting of laterally associated linear protofilaments composed of alpha- and beta-tubulin heterodimers. Microtubules grow by the addition of GTP-tubulin dimers to the microtubule end, where a stabilizing cap forms. Below the cap, tubulin dimers are in GDP-bound state, owing to GTPase activity of alpha-tubulin. The protein is Tubulin beta-1 chain (TUBB1) of Avena sativa (Oat).